A 799-amino-acid polypeptide reads, in one-letter code: Rho GTPase-activating protein gacI (799 aa).

In terms of domain architecture, Rho-GAP spans 226–451 (IKLEEVFARE…LLVEHVLTIF (226 aa)). Polar residues predominate over residues 472-520 (RSQSDISSQTKPLPSLPTSPQNRSAIITGDSSSPSLNTPPVKSSLNSSD). Disordered stretches follow at residues 472–572 (RSQS…PTSN) and 741–799 (EKQQ…LSNQ). The segment covering 525 to 549 (DNGSNNNNNNNTTNTITNNGIADTA) has biased composition (low complexity). Over residues 550–568 (TPPPPTTPTAPTTPPPPTT) the composition is skewed to pro residues. Low complexity-rich tracts occupy residues 743–752 (QQQQQQQQTN) and 759–791 (ISSNTNTSISGDNSENGDSLNSSTSNQSPLNSS).

The protein localises to the cytoplasm. In terms of biological role, rho GTPase-activating protein involved in the signal transduction pathway. The protein is Rho GTPase-activating protein gacI (gacI) of Dictyostelium discoideum (Social amoeba).